The primary structure comprises 180 residues: NAD(P)H-quinone oxidoreductase subunit I, chloroplastic (180 aa).

2 consecutive 4Fe-4S ferredoxin-type domains span residues 55–84 (GRIH…VDWR) and 95–124 (LNYS…MTEE). Positions 64, 67, 70, 74, 104, 107, 110, and 114 each coordinate [4Fe-4S] cluster.

Belongs to the complex I 23 kDa subunit family. In terms of assembly, NDH is composed of at least 16 different subunits, 5 of which are encoded in the nucleus. Requires [4Fe-4S] cluster as cofactor.

The protein localises to the plastid. The protein resides in the chloroplast thylakoid membrane. It carries out the reaction a plastoquinone + NADH + (n+1) H(+)(in) = a plastoquinol + NAD(+) + n H(+)(out). The catalysed reaction is a plastoquinone + NADPH + (n+1) H(+)(in) = a plastoquinol + NADP(+) + n H(+)(out). Functionally, NDH shuttles electrons from NAD(P)H:plastoquinone, via FMN and iron-sulfur (Fe-S) centers, to quinones in the photosynthetic chain and possibly in a chloroplast respiratory chain. The immediate electron acceptor for the enzyme in this species is believed to be plastoquinone. Couples the redox reaction to proton translocation, and thus conserves the redox energy in a proton gradient. The chain is NAD(P)H-quinone oxidoreductase subunit I, chloroplastic from Agrostis stolonifera (Creeping bentgrass).